We begin with the raw amino-acid sequence, 414 residues long: TBC domain-containing protein C1778.09 (414 aa).

Positions 158–343 constitute a Rab-GAP TBC domain; it reads GIPDCWRSIA…RIWDLLFLLG (186 aa).

The protein resides in the cytoplasm. It localises to the nucleus. This is TBC domain-containing protein C1778.09 from Schizosaccharomyces pombe (strain 972 / ATCC 24843) (Fission yeast).